The following is a 120-amino-acid chain: NAD(P)H-quinone oxidoreductase subunit 3, chloroplastic (120 aa).

3 helical membrane-spanning segments follow: residues 9–29, 64–84, and 88–108; these read IFWAFLIISSAIPFLAFLISG, MFALVFVVFDVETVFLYPWAM, and VLGVSAFIEAFVFVLILILGL.

Belongs to the complex I subunit 3 family. NDH is composed of at least 16 different subunits, 5 of which are encoded in the nucleus.

It localises to the plastid. The protein resides in the chloroplast thylakoid membrane. The catalysed reaction is a plastoquinone + NADH + (n+1) H(+)(in) = a plastoquinol + NAD(+) + n H(+)(out). The enzyme catalyses a plastoquinone + NADPH + (n+1) H(+)(in) = a plastoquinol + NADP(+) + n H(+)(out). Functionally, NDH shuttles electrons from NAD(P)H:plastoquinone, via FMN and iron-sulfur (Fe-S) centers, to quinones in the photosynthetic chain and possibly in a chloroplast respiratory chain. The immediate electron acceptor for the enzyme in this species is believed to be plastoquinone. Couples the redox reaction to proton translocation, and thus conserves the redox energy in a proton gradient. The polypeptide is NAD(P)H-quinone oxidoreductase subunit 3, chloroplastic (Aethionema grandiflorum (Persian stone-cress)).